The sequence spans 243 residues: Protein HUA2 (243 aa).

The protein localises to the cytoplasm. In terms of biological role, may have a role in actin patch assembly. The sequence is that of Protein HUA2 (HUA2) from Saccharomyces cerevisiae (strain ATCC 204508 / S288c) (Baker's yeast).